The chain runs to 514 residues: Na(+)/H(+) antiporter NhaB (514 aa).

12 consecutive transmembrane segments (helical) span residues 23–43 (LALL…PFVA), 63–83 (PLLP…TSAA), 97–117 (LLLM…LFIF), 120–140 (LLLS…AAAF), 144–164 (FLDA…FYGI), 202–222 (LMMH…VGEP), 238–258 (FFLR…LTCM), 303–323 (AVIG…VGLI), 357–377 (LTVF…APII), 391–411 (LFYL…VGTI), 447–467 (ATPN…APLI), and 475–495 (VWMA…CVEF).

It belongs to the NhaB Na(+)/H(+) (TC 2.A.34) antiporter family.

Its subcellular location is the cell inner membrane. The catalysed reaction is 2 Na(+)(in) + 3 H(+)(out) = 2 Na(+)(out) + 3 H(+)(in). Functionally, na(+)/H(+) antiporter that extrudes sodium in exchange for external protons. The sequence is that of Na(+)/H(+) antiporter NhaB from Salmonella paratyphi A (strain ATCC 9150 / SARB42).